A 210-amino-acid chain; its full sequence is uncharacterized protein (210 aa).

This is an uncharacterized protein from Fowl adenovirus A serotype 1 (strain CELO / Phelps) (FAdV-1).